Consider the following 360-residue polypeptide: UDP-N-acetylglucosamine--N-acetylmuramyl-(pentapeptide) pyrophosphoryl-undecaprenol N-acetylglucosamine transferase (360 aa).

UDP-N-acetyl-alpha-D-glucosamine-binding residues include S198 and Q289.

The protein belongs to the glycosyltransferase 28 family. MurG subfamily.

The protein localises to the cell membrane. The enzyme catalyses Mur2Ac(oyl-L-Ala-gamma-D-Glu-L-Lys-D-Ala-D-Ala)-di-trans,octa-cis-undecaprenyl diphosphate + UDP-N-acetyl-alpha-D-glucosamine = beta-D-GlcNAc-(1-&gt;4)-Mur2Ac(oyl-L-Ala-gamma-D-Glu-L-Lys-D-Ala-D-Ala)-di-trans,octa-cis-undecaprenyl diphosphate + UDP + H(+). Its pathway is cell wall biogenesis; peptidoglycan biosynthesis. Cell wall formation. Catalyzes the transfer of a GlcNAc subunit on undecaprenyl-pyrophosphoryl-MurNAc-pentapeptide (lipid intermediate I) to form undecaprenyl-pyrophosphoryl-MurNAc-(pentapeptide)GlcNAc (lipid intermediate II). The polypeptide is UDP-N-acetylglucosamine--N-acetylmuramyl-(pentapeptide) pyrophosphoryl-undecaprenol N-acetylglucosamine transferase (Streptococcus pyogenes serotype M5 (strain Manfredo)).